The following is a 140-amino-acid chain: ATP synthase epsilon chain (140 aa).

The protein belongs to the ATPase epsilon chain family. As to quaternary structure, F-type ATPases have 2 components, CF(1) - the catalytic core - and CF(0) - the membrane proton channel. CF(1) has five subunits: alpha(3), beta(3), gamma(1), delta(1), epsilon(1). CF(0) has three main subunits: a, b and c.

It is found in the cell inner membrane. Produces ATP from ADP in the presence of a proton gradient across the membrane. In Sodalis glossinidius (strain morsitans), this protein is ATP synthase epsilon chain.